Consider the following 114-residue polypeptide: Ribosome-binding factor A (114 aa).

This sequence belongs to the RbfA family. As to quaternary structure, monomer. Binds 30S ribosomal subunits, but not 50S ribosomal subunits or 70S ribosomes.

It is found in the cytoplasm. One of several proteins that assist in the late maturation steps of the functional core of the 30S ribosomal subunit. Associates with free 30S ribosomal subunits (but not with 30S subunits that are part of 70S ribosomes or polysomes). Required for efficient processing of 16S rRNA. May interact with the 5'-terminal helix region of 16S rRNA. The chain is Ribosome-binding factor A from Vesicomyosocius okutanii subsp. Calyptogena okutanii (strain HA).